The following is a 275-amino-acid chain: Dermonecrotic toxin SpeSicTox-betaIIA2ii (275 aa).

Histidine 5 is an active-site residue. Glutamate 25 and aspartate 27 together coordinate Mg(2+). Histidine 41 serves as the catalytic Nucleophile. Cystine bridges form between cysteine 45/cysteine 51 and cysteine 47/cysteine 190. Mg(2+) is bound at residue aspartate 85.

Belongs to the arthropod phospholipase D family. Class II subfamily. Mg(2+) is required as a cofactor. In terms of tissue distribution, expressed by the venom gland.

It localises to the secreted. The catalysed reaction is an N-(acyl)-sphingosylphosphocholine = an N-(acyl)-sphingosyl-1,3-cyclic phosphate + choline. The enzyme catalyses an N-(acyl)-sphingosylphosphoethanolamine = an N-(acyl)-sphingosyl-1,3-cyclic phosphate + ethanolamine. It catalyses the reaction a 1-acyl-sn-glycero-3-phosphocholine = a 1-acyl-sn-glycero-2,3-cyclic phosphate + choline. It carries out the reaction a 1-acyl-sn-glycero-3-phosphoethanolamine = a 1-acyl-sn-glycero-2,3-cyclic phosphate + ethanolamine. In terms of biological role, dermonecrotic toxins cleave the phosphodiester linkage between the phosphate and headgroup of certain phospholipids (sphingolipid and lysolipid substrates), forming an alcohol (often choline) and a cyclic phosphate. This toxin acts on sphingomyelin (SM). It may also act on ceramide phosphoethanolamine (CPE), lysophosphatidylcholine (LPC) and lysophosphatidylethanolamine (LPE), but not on lysophosphatidylserine (LPS), and lysophosphatidylglycerol (LPG). It acts by transphosphatidylation, releasing exclusively cyclic phosphate products as second products. Induces dermonecrosis, hemolysis, increased vascular permeability, edema, inflammatory response, and platelet aggregation. This Sicarius peruensis (Six-eyed sand spider) protein is Dermonecrotic toxin SpeSicTox-betaIIA2ii.